A 132-amino-acid chain; its full sequence is Agouti-signaling protein (132 aa).

An N-terminal signal peptide occupies residues 1–22 (MDVTRLLLATLLVFLCFFTAYS). An N-linked (GlcNAc...) asparagine glycan is attached at Asn-39. The interval 57–88 (KKSKQTSRKEAEKKRSSKKEASMKKVARPRTP) is disordered. The segment covering 63 to 79 (SRKEAEKKRSSKKEASM) has biased composition (basic and acidic residues). Intrachain disulfides connect Cys-93/Cys-108, Cys-100/Cys-114, Cys-107/Cys-125, Cys-111/Cys-132, and Cys-116/Cys-123. The 40-residue stretch at 93-132 (CVATRDSCKPPAPACCDPCASCQCRFFRSACSCRVLSLNC) folds into the Agouti domain.

It is found in the secreted. In terms of biological role, involved in the regulation of melanogenesis. The binding of ASP to MC1R precludes alpha-MSH initiated signaling and thus blocks production of cAMP, leading to a down-regulation of eumelanogenesis (brown/black pigment) and thus increasing synthesis of pheomelanin (yellow/red pigment). The chain is Agouti-signaling protein (ASIP) from Macaca assamensis (Assam macaque).